The sequence spans 316 residues: MQILLANPRGFCAGVDRAISIVERALELFGTPIYVRHEVVHNRYVVNGLRERGAIFIEQIEDVPDGAILIFSAHGVSQAVRNEAKNRDLTVFDATCPLVTKVHMEVARASKKGVEAILIGHAGHPEVEGTMGQYSNADGGMYLVESPDDVWQLQVKDEKNLCFMTQTTLSVDDTYAVIDALRERFPRIIGPRKDDICYATTNRQEAVRHLSDKADVVFVVGSKNSSNSNRLAELAQRAGKAAYLIDSADDIQESWLTGASYVGVTAGASAPDILVQQVIQRLKELGGKVAVEMQGREENIVFEVPKELRVEVKQID.

Cysteine 12 contacts [4Fe-4S] cluster. (2E)-4-hydroxy-3-methylbut-2-enyl diphosphate is bound by residues histidine 41 and histidine 74. Residues histidine 41 and histidine 74 each contribute to the dimethylallyl diphosphate site. Residues histidine 41 and histidine 74 each coordinate isopentenyl diphosphate. Cysteine 96 serves as a coordination point for [4Fe-4S] cluster. A (2E)-4-hydroxy-3-methylbut-2-enyl diphosphate-binding site is contributed by histidine 124. Histidine 124 is a binding site for dimethylallyl diphosphate. Histidine 124 provides a ligand contact to isopentenyl diphosphate. Catalysis depends on glutamate 126, which acts as the Proton donor. A (2E)-4-hydroxy-3-methylbut-2-enyl diphosphate-binding site is contributed by threonine 167. A [4Fe-4S] cluster-binding site is contributed by cysteine 197. Serine 225, serine 226, asparagine 227, and serine 269 together coordinate (2E)-4-hydroxy-3-methylbut-2-enyl diphosphate. Dimethylallyl diphosphate-binding residues include serine 225, serine 226, asparagine 227, and serine 269. Serine 225, serine 226, asparagine 227, and serine 269 together coordinate isopentenyl diphosphate.

It belongs to the IspH family. As to quaternary structure, homodimer. It depends on [4Fe-4S] cluster as a cofactor.

The enzyme catalyses isopentenyl diphosphate + 2 oxidized [2Fe-2S]-[ferredoxin] + H2O = (2E)-4-hydroxy-3-methylbut-2-enyl diphosphate + 2 reduced [2Fe-2S]-[ferredoxin] + 2 H(+). The catalysed reaction is dimethylallyl diphosphate + 2 oxidized [2Fe-2S]-[ferredoxin] + H2O = (2E)-4-hydroxy-3-methylbut-2-enyl diphosphate + 2 reduced [2Fe-2S]-[ferredoxin] + 2 H(+). Its pathway is isoprenoid biosynthesis; dimethylallyl diphosphate biosynthesis; dimethylallyl diphosphate from (2E)-4-hydroxy-3-methylbutenyl diphosphate: step 1/1. It participates in isoprenoid biosynthesis; isopentenyl diphosphate biosynthesis via DXP pathway; isopentenyl diphosphate from 1-deoxy-D-xylulose 5-phosphate: step 6/6. Functionally, catalyzes the conversion of 1-hydroxy-2-methyl-2-(E)-butenyl 4-diphosphate (HMBPP) into a mixture of isopentenyl diphosphate (IPP) and dimethylallyl diphosphate (DMAPP). Acts in the terminal step of the DOXP/MEP pathway for isoprenoid precursor biosynthesis. In Pectobacterium atrosepticum (strain SCRI 1043 / ATCC BAA-672) (Erwinia carotovora subsp. atroseptica), this protein is 4-hydroxy-3-methylbut-2-enyl diphosphate reductase.